A 179-amino-acid chain; its full sequence is MNQPTSLYLASLLEVEWQKPEEFEFPNEFAKHWLEEQGSLSRRLKQHCQELTVELLQNHIVTAKTLKSDESQLLSEQDCLLREVVLCGDDCPWVVGRTLIPRTTLVDQQYDLAQQGDIPLGLTVFSADNVERDSLQMGWVHLPQGRFLARRSRLWMNHKPMLVAELFLSNSPIYAKERV.

Substrate contacts are provided by R82, L120, and E165.

The protein belongs to the UbiC family.

It is found in the cytoplasm. It catalyses the reaction chorismate = 4-hydroxybenzoate + pyruvate. The protein operates within cofactor biosynthesis; ubiquinone biosynthesis. Functionally, removes the pyruvyl group from chorismate, with concomitant aromatization of the ring, to provide 4-hydroxybenzoate (4HB) for the ubiquinone pathway. The polypeptide is Probable chorismate pyruvate-lyase (Vibrio parahaemolyticus serotype O3:K6 (strain RIMD 2210633)).